We begin with the raw amino-acid sequence, 382 residues long: G2/mitotic-specific cyclin-B2 (382 aa).

Residues 1-12 (MSSVEAVTQQQL) show a composition bias toward polar residues. The segment at 1 to 78 (MSSVEAVTQQ…HTSAGDPAPI (78 aa)) is disordered. Positions 38–47 (NRNAAAAANR) are enriched in low complexity.

It belongs to the cyclin family. Cyclin AB subfamily. As to quaternary structure, interacts with the CDK1 protein kinase to form a serine/threonine kinase holoenzyme complex also known as maturation promoting factor (MPF). The cyclin subunit imparts substrate specificity to the complex.

Its function is as follows. Essential for the control of the cell cycle at the G2/M (mitosis) transition. The chain is G2/mitotic-specific cyclin-B2 (ccnb2) from Oryzias javanicus (Javanese ricefish).